Reading from the N-terminus, the 179-residue chain is Putative cleavage and polyadenylation specificity factor subunit 4-like protein (179 aa).

5 C3H1-type zinc fingers span residues 35 to 61, 62 to 89, 90 to 117, 118 to 145, and 146 to 169; these read KSAS…RHDR, GEKM…HQYD, LTRM…HVKP, AFKS…HVPR, and IMCL…QKIR.

The protein belongs to the CPSF4/YTH1 family.

This chain is Putative cleavage and polyadenylation specificity factor subunit 4-like protein (CPSF4L), found in Homo sapiens (Human).